The chain runs to 158 residues: Lipoprotein signal peptidase (158 aa).

4 helical membrane passes run 7-27 (LFWI…YWVV), 38-58 (LLTG…FSLL), 68-88 (LSLG…TLNL), and 92-112 (LGYG…FVLG). Active-site residues include D116 and D132. A helical transmembrane segment spans residues 125–145 (FPVFNVADSFISIGIVFLLIA).

This sequence belongs to the peptidase A8 family.

It localises to the cell inner membrane. It carries out the reaction Release of signal peptides from bacterial membrane prolipoproteins. Hydrolyzes -Xaa-Yaa-Zaa-|-(S,diacylglyceryl)Cys-, in which Xaa is hydrophobic (preferably Leu), and Yaa (Ala or Ser) and Zaa (Gly or Ala) have small, neutral side chains.. It participates in protein modification; lipoprotein biosynthesis (signal peptide cleavage). Functionally, this protein specifically catalyzes the removal of signal peptides from prolipoproteins. The polypeptide is Lipoprotein signal peptidase (Nostoc punctiforme (strain ATCC 29133 / PCC 73102)).